Reading from the N-terminus, the 231-residue chain is Small ribosomal subunit protein uS3 (231 aa).

In terms of domain architecture, KH type-2 spans I39 to R107.

Belongs to the universal ribosomal protein uS3 family. In terms of assembly, part of the 30S ribosomal subunit. Forms a tight complex with proteins S10 and S14.

In terms of biological role, binds the lower part of the 30S subunit head. Binds mRNA in the 70S ribosome, positioning it for translation. In Novosphingobium aromaticivorans (strain ATCC 700278 / DSM 12444 / CCUG 56034 / CIP 105152 / NBRC 16084 / F199), this protein is Small ribosomal subunit protein uS3.